The following is a 128-amino-acid chain: Aspartate 1-decarboxylase (128 aa).

Catalysis depends on Ser-25, which acts as the Schiff-base intermediate with substrate; via pyruvic acid. A Pyruvic acid (Ser) modification is found at Ser-25. Thr-57 serves as a coordination point for substrate. Tyr-58 (proton donor) is an active-site residue. Position 73–75 (Gly-73–Ala-75) interacts with substrate.

This sequence belongs to the PanD family. Heterooctamer of four alpha and four beta subunits. Requires pyruvate as cofactor. Is synthesized initially as an inactive proenzyme, which is activated by self-cleavage at a specific serine bond to produce a beta-subunit with a hydroxyl group at its C-terminus and an alpha-subunit with a pyruvoyl group at its N-terminus.

Its subcellular location is the cytoplasm. It catalyses the reaction L-aspartate + H(+) = beta-alanine + CO2. It functions in the pathway cofactor biosynthesis; (R)-pantothenate biosynthesis; beta-alanine from L-aspartate: step 1/1. In terms of biological role, catalyzes the pyruvoyl-dependent decarboxylation of aspartate to produce beta-alanine. This Burkholderia pseudomallei (strain 668) protein is Aspartate 1-decarboxylase.